Reading from the N-terminus, the 249-residue chain is Cytochrome c oxidase subunit 2 (249 aa).

A run of 2 helical transmembrane segments spans residues 40-60 and 81-101; these read NIMFYLLVILGLVSWMLYTIT and IIWTIFPAVVLLIIAFPSFIL. Cu cation-binding residues include H184, C219, E221, C223, H227, and M230. Position 221 (E221) interacts with Mg(2+).

Belongs to the cytochrome c oxidase subunit 2 family. In terms of assembly, component of the cytochrome c oxidase (complex IV, CIV), a multisubunit enzyme composed of a catalytic core of 3 subunits and several supernumerary subunits. The complex exists as a monomer or a dimer and forms supercomplexes (SCs) in the inner mitochondrial membrane with ubiquinol-cytochrome c oxidoreductase (cytochrome b-c1 complex, complex III, CIII). Cu cation serves as cofactor.

It is found in the mitochondrion inner membrane. It carries out the reaction 4 Fe(II)-[cytochrome c] + O2 + 8 H(+)(in) = 4 Fe(III)-[cytochrome c] + 2 H2O + 4 H(+)(out). Its function is as follows. Component of the cytochrome c oxidase, the last enzyme in the mitochondrial electron transport chain which drives oxidative phosphorylation. The respiratory chain contains 3 multisubunit complexes succinate dehydrogenase (complex II, CII), ubiquinol-cytochrome c oxidoreductase (cytochrome b-c1 complex, complex III, CIII) and cytochrome c oxidase (complex IV, CIV), that cooperate to transfer electrons derived from NADH and succinate to molecular oxygen, creating an electrochemical gradient over the inner membrane that drives transmembrane transport and the ATP synthase. Cytochrome c oxidase is the component of the respiratory chain that catalyzes the reduction of oxygen to water. Electrons originating from reduced cytochrome c in the intermembrane space (IMS) are transferred via the dinuclear copper A center (CU(A)) of subunit 2 and heme A of subunit 1 to the active site in subunit 1, a binuclear center (BNC) formed by heme A3 and copper B (CU(B)). The BNC reduces molecular oxygen to 2 water molecules using 4 electrons from cytochrome c in the IMS and 4 protons from the mitochondrial matrix. In Vanderwaltozyma polyspora (strain ATCC 22028 / DSM 70294 / BCRC 21397 / CBS 2163 / NBRC 10782 / NRRL Y-8283 / UCD 57-17) (Kluyveromyces polysporus), this protein is Cytochrome c oxidase subunit 2 (COX2).